The sequence spans 65 residues: Weak neurotoxin 6 (65 aa).

5 cysteine pairs are disulfide-bonded: cysteine 3-cysteine 24, cysteine 6-cysteine 11, cysteine 17-cysteine 42, cysteine 46-cysteine 57, and cysteine 58-cysteine 63.

Belongs to the three-finger toxin family. Ancestral subfamily. Orphan group II sub-subfamily. In terms of tissue distribution, expressed by the venom gland.

It localises to the secreted. In terms of biological role, binds with low affinity to muscular (alpha-1-beta-1-delta-epsilon/CHRNA1-CHRNB1-CHRND-CHRNE) and very low affinity to neuronal (alpha-7/CHRNA7) nicotinic acetylcholine receptor (nAChR). The sequence is that of Weak neurotoxin 6 from Naja naja (Indian cobra).